A 690-amino-acid chain; its full sequence is Elongation factor G (690 aa).

In terms of domain architecture, tr-type G spans 8–283 (EDYRNFGIMA…AVVDYLPSPV (276 aa)). GTP is bound by residues 17-24 (AHIDAGKT), 81-85 (DTPGH), and 135-138 (NKMD).

It belongs to the TRAFAC class translation factor GTPase superfamily. Classic translation factor GTPase family. EF-G/EF-2 subfamily.

Its subcellular location is the cytoplasm. Functionally, catalyzes the GTP-dependent ribosomal translocation step during translation elongation. During this step, the ribosome changes from the pre-translocational (PRE) to the post-translocational (POST) state as the newly formed A-site-bound peptidyl-tRNA and P-site-bound deacylated tRNA move to the P and E sites, respectively. Catalyzes the coordinated movement of the two tRNA molecules, the mRNA and conformational changes in the ribosome. In Rhodopseudomonas palustris (strain BisA53), this protein is Elongation factor G.